Consider the following 513-residue polypeptide: Flavonoid 3'-monooxygenase (513 aa).

The chain crosses the membrane as a helical span at residues 1 to 21; it reads MATLFLTILLATVLFLILRIF. The Cytoplasmic portion of the chain corresponds to 22 to 513; that stretch reads SHRRNRSHNN…APNVYGLGSG (492 aa). Residue cysteine 445 coordinates heme.

The protein belongs to the cytochrome P450 family. Requires heme as cofactor. High expression in siliques and to a lower extent in stems, flowers and senescing leaves.

The protein resides in the endoplasmic reticulum membrane. It carries out the reaction a 3'-unsubstituted flavone + reduced [NADPH--hemoprotein reductase] + O2 = a 3'-hydroxyflavone + oxidized [NADPH--hemoprotein reductase] + H2O + H(+). It functions in the pathway secondary metabolite biosynthesis; flavonoid biosynthesis. Catalyzes the 3'-hydroxylation of the flavonoid B-ring to the 3',4'-hydroxylated state. Convert naringenin to eriodictyol and dihydrokaempferol to dihydroquercetin. This chain is Flavonoid 3'-monooxygenase (CYP75B1), found in Arabidopsis thaliana (Mouse-ear cress).